Consider the following 272-residue polypeptide: uncharacterized protein (272 aa).

Residues aspartate 71 and glutamate 163 contribute to the active site.

This sequence belongs to the glycosyl hydrolase 25 family.

This is an uncharacterized protein from Escherichia coli (strain K12).